A 276-amino-acid chain; its full sequence is Streptothricin hydrolase (276 aa).

C176 (nucleophile) is an active-site residue. Residues 250–276 form a disordered region; that stretch reads PEAPAAAAAPAAGTGLSPAGPPPAPAR. Low complexity predominate over residues 252 to 267; sequence APAAAAAPAAGTGLSP.

The protein belongs to the isochorismatase family. In terms of assembly, homodimer. Does not require a metal cofactor. is required as a cofactor.

It carries out the reaction streptothricin F + H2O = streptothricin F acid. Functionally, catalyzes the hydrolysis of the amide bond of streptolidine lactam, thereby conferring streptothricin (ST) resistance. Can hydrolyze streptothricin-F and streptothricin-D. However, this strain is believed to be a ST nonproducer, which raises the possibility that its true role may not be its involvement in self-resistance to STs. May catalyze the hydrolysis of naturally occurring cyclic amide compounds that are structurally related to STs. The polypeptide is Streptothricin hydrolase (sttH) (Streptomyces noursei (Streptomyces albulus)).